Here is a 459-residue protein sequence, read N- to C-terminus: Methionine aminopeptidase 2-1 (459 aa).

The segment covering 1–12 (MGSKSPEDHRQG) has biased composition (basic and acidic residues). The disordered stretch occupies residues 1–79 (MGSKSPEDHR…RKRNKKKSKK (79 aa)). The segment covering 43–54 (GQDEDGDDDDDE) has biased composition (acidic residues). Basic residues predominate over residues 67 to 79 (KKKRKRNKKKSKK). His210 contacts substrate. Asp231, Asp242, and His311 together coordinate a divalent metal cation. His319 lines the substrate pocket. A divalent metal cation-binding residues include Glu344 and Glu440.

This sequence belongs to the peptidase M24A family. Methionine aminopeptidase eukaryotic type 2 subfamily. Co(2+) is required as a cofactor. The cofactor is Zn(2+). Requires Mn(2+) as cofactor. Fe(2+) serves as cofactor.

Its subcellular location is the cytoplasm. The catalysed reaction is Release of N-terminal amino acids, preferentially methionine, from peptides and arylamides.. Functionally, cotranslationally removes the N-terminal methionine from nascent proteins. The N-terminal methionine is often cleaved when the second residue in the primary sequence is small and uncharged (Met-Ala-, Cys, Gly, Pro, Ser, Thr, or Val). This chain is Methionine aminopeptidase 2-1, found in Pyrenophora tritici-repentis (strain Pt-1C-BFP) (Wheat tan spot fungus).